The following is a 439-amino-acid chain: UDP-N-acetylglucosamine--peptide N-acetylglucosaminyltransferase stabilizing protein GtfB (439 aa).

This sequence belongs to the GtfB family. As to quaternary structure, interacts with glycosyltransferase GtfA (Gtf2); probably forms a heterotetramer with 2 subunits each of GtfA and GtfB. Part of the accessory SecA2/SecY2 protein translocation apparatus.

The protein resides in the cell membrane. It participates in protein modification; protein glycosylation. Its function is as follows. Required for the polymorphic O-glycosylation of the serine-rich repeat protein Fap1. A stabilizing protein that is part of the accessory SecA2/SecY2 system specifically required to export Fap1, a serine-rich fimbrial adhesin encoded upstream in the same operon. The GtfA-GtfB (Gtf1-Gtf2 in this bacteria) complex adds GlcNAc from UDP-GlcNAc to Fap1, attaching the first sugar residue. Cannot use not UDP-Glc as substrate. Stabilizes the glycosylation activity of GtfA, causing it to partially localize to the cellular membrane where it is more protease resistant. The protein is UDP-N-acetylglucosamine--peptide N-acetylglucosaminyltransferase stabilizing protein GtfB of Streptococcus parasanguinis.